Here is a 212-residue protein sequence, read N- to C-terminus: Thymidylate kinase (212 aa).

Residue 10–17 (GLEGAGKT) participates in ATP binding.

Belongs to the thymidylate kinase family.

The enzyme catalyses dTMP + ATP = dTDP + ADP. Phosphorylation of dTMP to form dTDP in both de novo and salvage pathways of dTTP synthesis. This is Thymidylate kinase from Yersinia pseudotuberculosis serotype O:1b (strain IP 31758).